The chain runs to 380 residues: Alkanesulfonate monooxygenase (380 aa).

The protein belongs to the SsuD family. Homotetramer.

It catalyses the reaction an alkanesulfonate + FMNH2 + O2 = an aldehyde + FMN + sulfite + H2O + 2 H(+). Catalyzes the desulfonation of aliphatic sulfonates. The polypeptide is Alkanesulfonate monooxygenase (Pectobacterium atrosepticum (strain SCRI 1043 / ATCC BAA-672) (Erwinia carotovora subsp. atroseptica)).